We begin with the raw amino-acid sequence, 168 residues long: SPbeta prophage-derived uncharacterized protein YomW (168 aa).

The polypeptide is SPbeta prophage-derived uncharacterized protein YomW (yomW) (Bacillus subtilis (strain 168)).